Here is a 745-residue protein sequence, read N- to C-terminus: Arf-GAP with coiled-coil, ANK repeat and PH domain-containing protein 1 (745 aa).

A BAR domain is found at 1 to 226; it reads MTVKLDFEEC…RKELGGQLHQ (226 aa). Residues 1–382 form a required for formation of endosomal tubules when overexpressed with PIP5K1C region; that stretch reads MTVKLDFEEC…RGLGQGSGHL (382 aa). The region spanning 265-360 is the PH domain; sequence GLVMEGHLFK…WVSAVQSSIA (96 aa). Residues 405–527 enclose the Arf-GAP domain; it reads GHVAAQVQSV…KFLTKLPEIR (123 aa). Residues 405 to 745 are required for interaction with GULP1; the sequence is GHVAAQVQSV…SRRSHDLHTL (341 aa). The segment at 420 to 443 adopts a C4-type zinc-finger fold; sequence CCDCREPAPEWASINLGVTLCIQC. The residue at position 485 (Tyr485) is a 3'-nitrotyrosine. The tract at residues 525–567 is prevents interaction with ITGB1 when S-554 is not phosphorylated; sequence EIRGRRGGRGPPRGHPPVPPKPGLIRPKPGSFRSKPEPPSEDL. Positions 525 to 569 are disordered; it reads EIRGRRGGRGPPRGHPPVPPKPGLIRPKPGSFRSKPEPPSEDLQS. Positions 537-546 are enriched in pro residues; sequence RGHPPVPPKP. A Phosphoserine; by PKB modification is found at Ser555. ANK repeat units follow at residues 607-640, 644-673, and 677-707; these read ENAT…NVNQ, QGRG…DLGV, and EGRD…EADA.

In terms of assembly, banana-shaped homodimer laterally assembling into tetramers, the tetramers further pack helically onto the membrane. Interacts with GTP-bound ARF6. Interacts with third cytoplasmic loop of SLC2A4/GLUT4. Interacts with CLTC. Interacts with GULP1. Forms a complex with GDP-bound ARF6 and GULP1. Interacts with ITGB1; required for ITGB1 recycling. In terms of processing, phosphorylation at Ser-555 by PKB is required for interaction with ITGB1, export of ITGB1 from recycling endosomes to the cell surface and ITGB1-dependent cell migration.

Its subcellular location is the recycling endosome membrane. Its activity is regulated as follows. GAP activity stimulated by phosphatidylinositol 4,5-bisphosphate (PIP2) and phosphatidic acid. Its function is as follows. GTPase-activating protein (GAP) for ADP ribosylation factor 6 (ARF6) required for clathrin-dependent export of proteins from recycling endosomes to trans-Golgi network and cell surface. Required for regulated export of ITGB1 from recycling endosomes to the cell surface and ITGB1-dependent cell migration. The polypeptide is Arf-GAP with coiled-coil, ANK repeat and PH domain-containing protein 1 (ACAP1) (Bos taurus (Bovine)).